The primary structure comprises 237 residues: Small ribosomal subunit protein uS2 (237 aa).

This sequence belongs to the universal ribosomal protein uS2 family.

The chain is Small ribosomal subunit protein uS2 from Clostridioides difficile (strain 630) (Peptoclostridium difficile).